Here is a 274-residue protein sequence, read N- to C-terminus: Urease accessory protein UreD (274 aa).

It belongs to the UreD family. As to quaternary structure, ureD, UreF and UreG form a complex that acts as a GTP-hydrolysis-dependent molecular chaperone, activating the urease apoprotein by helping to assemble the nickel containing metallocenter of UreC. The UreE protein probably delivers the nickel.

The protein localises to the cytoplasm. Functionally, required for maturation of urease via the functional incorporation of the urease nickel metallocenter. The sequence is that of Urease accessory protein UreD from Enterobacter sp. (strain 638).